A 400-amino-acid chain; its full sequence is Snake venom metalloproteinase H3 (400 aa).

The N-terminal stretch at 1 to 6 (FPYQGS) is a signal peptide. The propeptide occupies 7-176 (SIILESGNVN…KKASQLIVST (170 aa)). In terms of domain architecture, Peptidase M12B spans 180 to 377 (KYMEIVIVVD…ENPPCILNKP (198 aa)). The Ca(2+) site is built by glutamate 183 and aspartate 267. 3 disulfides stabilise this stretch: cysteine 291–cysteine 372, cysteine 331–cysteine 356, and cysteine 333–cysteine 339. Histidine 316 contributes to the Zn(2+) binding site. The active site involves glutamate 317. Histidine 320 and histidine 326 together coordinate Zn(2+). The Ca(2+) site is built by cysteine 372, asparagine 375, valine 387, asparagine 390, leucine 392, glutamate 394, and aspartate 400. Residues 378 to 400 (LRTDTVSTPVSGNELLEAGKDYD) constitute a propeptide that is removed on maturation.

The protein belongs to the venom metalloproteinase (M12B) family. P-I subfamily. In terms of assembly, monomer. Zn(2+) is required as a cofactor. In terms of tissue distribution, expressed by the venom gland.

It is found in the secreted. Its function is as follows. Snake venom metalloproteinase that impairs hemostasis in the envenomed animal. The polypeptide is Snake venom metalloproteinase H3 (Deinagkistrodon acutus (Hundred-pace snake)).